The chain runs to 100 residues: MDFTTNEVLFSRLVVCKNLTRKNFPFLQLKGSSILRFEWSEEMYRLYIWLLPYRKDYNEKFKGILINPSIFLLGCHHVQICSFPNNLVFFMGKCDLFRFC.

This is an uncharacterized protein from Schizosaccharomyces pombe (strain 972 / ATCC 24843) (Fission yeast).